Reading from the N-terminus, the 222-residue chain is Beta-casein (222 aa).

The N-terminal stretch at 1 to 15 is a signal peptide; sequence MKVLILACLVALALA. Thr27 carries the phosphothreonine modification. 4 positions are modified to phosphoserine: Ser30, Ser32, Ser33, and Ser34.

The protein belongs to the beta-casein family. As to expression, mammary gland specific. Secreted in milk.

The protein resides in the secreted. Important role in determination of the surface properties of the casein micelles. This chain is Beta-casein (CSN2), found in Ovis aries (Sheep).